A 155-amino-acid chain; its full sequence is Leader peptidase HopD (155 aa).

This sequence belongs to the peptidase A24 family.

The polypeptide is Leader peptidase HopD (hopD) (Escherichia coli).